We begin with the raw amino-acid sequence, 83 residues long: Cyclin-dependent kinases regulatory subunit 2 (83 aa).

It belongs to the CKS family. In terms of assembly, interacts with CDKA-1, CYCD2-1 and AT4G14310.

Binds to the catalytic subunit of the cyclin dependent kinases and is essential for their biological function. The protein is Cyclin-dependent kinases regulatory subunit 2 (CKS2) of Arabidopsis thaliana (Mouse-ear cress).